Consider the following 800-residue polypeptide: Ribosome-releasing factor 2, mitochondrial (800 aa).

A tr-type G domain is found at 21 to 307 (SKVRNIGIIA…AIANYLPSPS (287 aa)). Residues 30 to 37 (AHIDAGKT), 95 to 99 (DTPGH), and 147 to 150 (NKMD) contribute to the GTP site.

This sequence belongs to the TRAFAC class translation factor GTPase superfamily. Classic translation factor GTPase family. EF-G/EF-2 subfamily.

The protein localises to the mitochondrion. Its function is as follows. Mitochondrial GTPase that mediates the disassembly of ribosomes from messenger RNA at the termination of mitochondrial protein biosynthesis. Not involved in the GTP-dependent ribosomal translocation step during translation elongation. In Kluyveromyces lactis (strain ATCC 8585 / CBS 2359 / DSM 70799 / NBRC 1267 / NRRL Y-1140 / WM37) (Yeast), this protein is Ribosome-releasing factor 2, mitochondrial.